The following is a 308-amino-acid chain: Aspartate carbamoyltransferase catalytic subunit (308 aa).

2 residues coordinate carbamoyl phosphate: R57 and T58. K86 contributes to the L-aspartate binding site. The carbamoyl phosphate site is built by R107, H135, and Q138. L-aspartate contacts are provided by R167 and R228. L267 and P268 together coordinate carbamoyl phosphate.

Belongs to the aspartate/ornithine carbamoyltransferase superfamily. ATCase family. In terms of assembly, heterooligomer of catalytic and regulatory chains.

It carries out the reaction carbamoyl phosphate + L-aspartate = N-carbamoyl-L-aspartate + phosphate + H(+). It participates in pyrimidine metabolism; UMP biosynthesis via de novo pathway; (S)-dihydroorotate from bicarbonate: step 2/3. Functionally, catalyzes the condensation of carbamoyl phosphate and aspartate to form carbamoyl aspartate and inorganic phosphate, the committed step in the de novo pyrimidine nucleotide biosynthesis pathway. The sequence is that of Aspartate carbamoyltransferase catalytic subunit from Methanococcoides burtonii (strain DSM 6242 / NBRC 107633 / OCM 468 / ACE-M).